The chain runs to 311 residues: E3 ubiquitin-protein ligase RNF126 (311 aa).

At alanine 2 the chain carries N-acetylalanine. Serine 5 bears the Phosphoserine mark. A required for interaction with BAG6 region spans residues 5-100 (SPHPGRYFCH…FEIPTFPPGA (96 aa)). 4 residues coordinate Zn(2+): cysteine 13, cysteine 16, cysteine 29, and cysteine 32. The segment at 13-32 (CHCCSVEIVPRLPDYICPRC) adopts a C4-type zinc-finger fold. Disordered stretches follow at residues 42–64 (EETRSTENGSAPSTAPTDQSRPP) and 94–132 (PTFPPGAQADDGRDPESRRERDHPSRHRYGARQPRARLT). Positions 47–61 (TENGSAPSTAPTDQS) are enriched in polar residues. The span at 103-116 (DDGRDPESRRERDH) shows a compositional bias: basic and acidic residues. Residues 117-132 (PSRHRYGARQPRARLT) show a composition bias toward basic residues. Residues 200 to 304 (TGPPPADKEK…SSSSSSSPSN (105 aa)) form a sufficient for interaction with AICDA region. The segment at 229–270 (CPVCKDDYALGERVRQLPCNHLFHDGCIVPWLEQHDSCPVCR) adopts an RING-type zinc-finger fold. The interval 277–311 (NTATNPPGLTGVSFSSSSSSSSSSSPSNENATSNS) is disordered. Low complexity predominate over residues 289–311 (SFSSSSSSSSSSSPSNENATSNS).

In terms of assembly, interacts with CCDC50, EGFR, FLT3 and SCAMP3. Interacts with BAG6 (via ubiquitin-like domain); required for BAG6-dependent ubiquitination of proteins mislocalized to the cytosol. Interacts with CDKN1A. Interacts with AICDA. Post-translationally, ubiquitinated. May undergo autoubiquitination. In terms of tissue distribution, highly expressed in liver and testis.

Its subcellular location is the cytoplasm. The protein resides in the nucleus. The enzyme catalyses S-ubiquitinyl-[E2 ubiquitin-conjugating enzyme]-L-cysteine + [acceptor protein]-L-lysine = [E2 ubiquitin-conjugating enzyme]-L-cysteine + N(6)-ubiquitinyl-[acceptor protein]-L-lysine.. Its pathway is protein modification; protein ubiquitination. Functionally, E3 ubiquitin-protein ligase that mediates ubiquitination oF target proteins. Depending on the associated E2 ligase, mediates 'Lys-27'-, 'Lys-29'-, 'Lys-48'- and/or 'Lys-63'-linked polyubiquitination of substrates. Part of a BAG6-dependent quality control process ensuring that proteins of the secretory pathway that are mislocalized to the cytosol are degraded by the proteasome. Probably acts by providing the ubiquitin ligase activity associated with the BAG6 complex and be responsible for ubiquitination of the hydrophobic mislocalized proteins and their targeting to the proteasome. May also play a role in the endosomal recycling of IGF2R, the cation-independent mannose-6-phosphate receptor. May play a role in the endosomal sorting and degradation of several membrane receptors including EGFR, FLT3, MET and CXCR4, by mediating their ubiquitination. By ubiquitinating CDKN1A/p21 and targeting it for degradation, may also promote cell proliferation. May monoubiquitinate AICDA. Acts as a regulator of DNA repair by mediating 'Lys-27'- and 'Lys-29'-linked polyubiquitination of MRE11, thereby promoting the exonuclease activity of MRE11. The polypeptide is E3 ubiquitin-protein ligase RNF126 (Homo sapiens (Human)).